The primary structure comprises 435 residues: Ornithine decarboxylase (435 aa).

An N6-(pyridoxal phosphate)lysine modification is found at K76. Pyridoxal 5'-phosphate contacts are provided by residues S207, G244, and 283–286; that span reads EPGR. Position 339 to 340 (339 to 340) interacts with substrate; it reads FD. The active-site Proton donor; shared with dimeric partner is C368. Residue D369 coordinates substrate. Y397 serves as a coordination point for pyridoxal 5'-phosphate.

This sequence belongs to the Orn/Lys/Arg decarboxylase class-II family. Homodimer. Only the dimer is catalytically active, as the active sites are constructed of residues from both monomers. Pyridoxal 5'-phosphate serves as cofactor.

It carries out the reaction L-ornithine + H(+) = putrescine + CO2. It functions in the pathway amine and polyamine biosynthesis; putrescine biosynthesis via L-ornithine pathway; putrescine from L-ornithine: step 1/1. Its activity is regulated as follows. Inhibited by antizyme (AZ) in response to polyamine levels. AZ inhibits the assembly of the functional homodimer by binding to ODC monomers and targeting them for ubiquitin-independent proteolytic destruction by the 26S proteasome. Its function is as follows. Catalyzes the first and rate-limiting step of polyamine biosynthesis that converts ornithine into putrescine, which is the precursor for the polyamines, spermidine and spermine. Polyamines are essential for cell proliferation and are implicated in cellular processes, ranging from DNA replication to apoptosis. This is Ornithine decarboxylase (ODC) from Panagrellus redivivus (Microworm).